We begin with the raw amino-acid sequence, 409 residues long: Calsequestrin-2 (409 aa).

Residues 1–19 (MKRAHLFVVGVYLLSSCRA) form the signal peptide. A Phosphotyrosine modification is found at Tyr-282. Asn-335 is a glycosylation site (N-linked (GlcNAc...) asparagine). The tract at residues 364 to 409 (DVLSGKINTEDDDNEDEDDDDDNDDDDDDNGNSDEEDNDDSDEDDE) is disordered. A compositionally biased stretch (acidic residues) spans 373 to 409 (EDDDNEDEDDDDDNDDDDDDNGNSDEEDNDDSDEDDE).

This sequence belongs to the calsequestrin family. Monomer, homodimer and homooligomer. Mostly monomeric in the absence of calcium. Forms higher oligomers in a calcium-dependent manner. Dimers associate to form tetramers, that then form linear homomer chains. Interacts with ASPH and TRDN. In terms of processing, phosphorylation in the C-terminus, probably by CK2, moderately increases calcium buffering capacity. N-glycosylated. As to expression, detected in heart muscle (at protein level).

It is found in the sarcoplasmic reticulum lumen. Calsequestrin is a high-capacity, moderate affinity, calcium-binding protein and thus acts as an internal calcium store in muscle. Calcium ions are bound by clusters of acidic residues at the protein surface, especially at the interface between subunits. Can bind around 60 Ca(2+) ions. Regulates the release of lumenal Ca(2+) via the calcium release channel RYR2; this plays an important role in triggering muscle contraction. Plays a role in excitation-contraction coupling in the heart and in regulating the rate of heart beats. The chain is Calsequestrin-2 (CASQ2) from Oryctolagus cuniculus (Rabbit).